Consider the following 944-residue polypeptide: Protocadherin gamma-C5 (944 aa).

An N-terminal signal peptide occupies residues 1–29 (MGPKTLPQLAGKWQVLCMLSLCCWGWVSG). 6 Cadherin domains span residues 30 to 133 (QLRY…SPSF), 134 to 242 (ATPE…APTF), 243 to 350 (QSSV…APEV), 351 to 454 (LLAS…APRF), 455 to 564 (NQQL…APAV), and 571 to 677 (WEHS…MPKS). Topologically, residues 30–693 (QLRYSVVEES…PPERSDLTLY (664 aa)) are extracellular. N-linked (GlcNAc...) asparagine glycans are attached at residues N265, N443, and N547. A helical membrane pass occupies residues 694–714 (LIVALATVSLLSLVTFTFLSA). Residues 715–944 (KCLQGNADGD…KKKSGKKEKK (230 aa)) are Cytoplasmic-facing. 3 disordered regions span residues 722-747 (DGDG…QSSP), 812-853 (SNTL…WPNN), and 914-944 (ATLT…KEKK). Over residues 820 to 853 (QQAPPNTDWRFSQAQRPGTSGSQNGDDTGTWPNN) the composition is skewed to polar residues. The segment covering 934–944 (NKKKSGKKEKK) has biased composition (basic residues).

Its subcellular location is the cell membrane. In terms of biological role, potential calcium-dependent cell-adhesion protein. May be involved in the establishment and maintenance of specific neuronal connections in the brain. This Homo sapiens (Human) protein is Protocadherin gamma-C5 (PCDHGC5).